The primary structure comprises 80 residues: U-actitoxin-Avd9b (80 aa).

An N-terminal signal peptide occupies residues 1–20; it reads MNLKVLAVFVLCAILVVVTA. The propeptide occupies 21–39; sequence ERRGTETGGYKKDTLQDLK. Positions 45 to 80 constitute a ShKT domain; it reads CFDRYREAACTSDNIRLLCKTSAKYQINCKKSCGLC. Cystine bridges form between cysteine 45-cysteine 80, cysteine 54-cysteine 73, and cysteine 63-cysteine 77. Positions 68–69 are crucial for binding to potassium channels; it reads KY.

The protein belongs to the sea anemone type 1 potassium channel toxin family. Type 1b subfamily.

The protein resides in the secreted. Its subcellular location is the nematocyst. Inhibits voltage-gated potassium channels (Kv1/KCNA). This Anemonia viridis (Snakelocks anemone) protein is U-actitoxin-Avd9b.